The chain runs to 248 residues: 1-(5-phosphoribosyl)-5-[(5-phosphoribosylamino)methylideneamino] imidazole-4-carboxamide isomerase (248 aa).

Catalysis depends on aspartate 8, which acts as the Proton acceptor. Aspartate 129 acts as the Proton donor in catalysis.

This sequence belongs to the HisA/HisF family.

The protein resides in the cytoplasm. The catalysed reaction is 1-(5-phospho-beta-D-ribosyl)-5-[(5-phospho-beta-D-ribosylamino)methylideneamino]imidazole-4-carboxamide = 5-[(5-phospho-1-deoxy-D-ribulos-1-ylimino)methylamino]-1-(5-phospho-beta-D-ribosyl)imidazole-4-carboxamide. Its pathway is amino-acid biosynthesis; L-histidine biosynthesis; L-histidine from 5-phospho-alpha-D-ribose 1-diphosphate: step 4/9. The polypeptide is 1-(5-phosphoribosyl)-5-[(5-phosphoribosylamino)methylideneamino] imidazole-4-carboxamide isomerase (Rhizobium etli (strain ATCC 51251 / DSM 11541 / JCM 21823 / NBRC 15573 / CFN 42)).